Here is a 2080-residue protein sequence, read N- to C-terminus: Fatty acid synthase beta subunit TOXC (2080 aa).

In terms of domain architecture, Starter acyltransferase (SAT) spans Gly170–Lys397. Ser276 functions as the For acetyltransferase activity in the catalytic mechanism. The enoyl reductase (ER) domain stretch occupies residues Ser585–Asp830. The interval Gly1155 to Leu1644 is dehydratase (DH) domain. The MaoC-like domain occupies Ser1544–Ala1662. A Malonyl-CoA:ACP transacylase (MAT) domain is found at Thr1682–Ser2046. A malonyl/palmitoyl transferase (MT/PT) domain region spans residues Tyr1683–Ser2046. Ser1828 (for malonyltransferase activity) is an active-site residue.

It belongs to the fungal fatty acid synthetase subunit beta family.

The catalysed reaction is acetyl-CoA + n malonyl-CoA + 2n NADPH + 4n H(+) = a long-chain-acyl-CoA + n CoA + n CO2 + 2n NADP(+).. It carries out the reaction holo-[ACP] + acetyl-CoA = acetyl-[ACP] + CoA. The enzyme catalyses holo-[ACP] + malonyl-CoA = malonyl-[ACP] + CoA. It catalyses the reaction a (3R)-hydroxyacyl-[ACP] = a (2E)-enoyl-[ACP] + H2O. The catalysed reaction is a 2,3-saturated acyl-[ACP] + NAD(+) = a (2E)-enoyl-[ACP] + NADH + H(+). It carries out the reaction (9Z)-octadecenoyl-[ACP] + H2O = (9Z)-octadecenoate + holo-[ACP] + H(+). Its pathway is mycotoxin biosynthesis; HC-toxin biosynthesis. Its function is as follows. Fatty acid synthase beta subunit, part of the diffuse TOX2 gene cluster that mediates the biosynthesis of the HC-toxin, cyclic tetrapeptide of structure cyclo(D-Pro-L-Ala-D-Ala-L-Aeo), where Aeo stands for 2-amino-9,10-epoxi-8-oxodecanoic acid. HC-toxin is a determinant of specificity and virulence in the interaction between the producing fungus and its host, maize. TOXC contribute to the synthesis of the decanoic backbone of 2-amino-9,10-epoxi-8-oxodecanoic acid, an essential precursor for the production of the major forms of HC-toxin by the non-ribosomal peptide synthetase HTS1. This is Fatty acid synthase beta subunit TOXC from Cochliobolus carbonum (Maize leaf spot fungus).